The sequence spans 73 residues: Ubiquitin-like protein 5 (73 aa).

The Ubiquitin-like domain occupies 1–73 (MIEITCNDRL…DGMNLELYYQ (73 aa)).

The protein resides in the cytoplasm. In Drosophila melanogaster (Fruit fly), this protein is Ubiquitin-like protein 5 (ubl).